We begin with the raw amino-acid sequence, 456 residues long: MFS-type transporter SLC18B1 (456 aa).

Methionine 1 carries the N-acetylmethionine modification. The tract at residues 1–24 is disordered; that stretch reads MEALGDLEGPRAPGGDDPAGSAGE. The Cytoplasmic portion of the chain corresponds to 1–33; it reads MEALGDLEGPRAPGGDDPAGSAGETPGWLSREQ. The span at 10 to 23 shows a compositional bias: low complexity; it reads PRAPGGDDPAGSAG. Serine 21 is subject to Phosphoserine. Residues 34–54 form a helical membrane-spanning segment; sequence VFVLISAASVNLGSMMCYSIL. The Extracellular segment spans residues 55-70; the sequence is GPFFPKEAEKKGASNT. A helical transmembrane segment spans residues 71 to 91; it reads IIGMIFGCFALFELLASLVFG. Residues 92–100 lie on the Cytoplasmic side of the membrane; it reads NYLVHIGAK. Residues 101–121 traverse the membrane as a helical segment; the sequence is FMFVAGMFVSGGVTILFGVLD. The Extracellular segment spans residues 122–127; it reads RVPDGP. The chain crosses the membrane as a helical span at residues 128 to 148; it reads VFIAMCFLVRVMDAVSFAAAM. Residues 149 to 161 are Cytoplasmic-facing; sequence TASSSILAKAFPN. The chain crosses the membrane as a helical span at residues 162 to 184; sequence NVATVLGSLETFSGLGLILGPPV. Over 185–195 the chain is Extracellular; sequence GGFLYQSFGYE. The chain crosses the membrane as a helical span at residues 196-216; that stretch reads VPFIVLGCVVLLMVPLNMYIL. The Cytoplasmic segment spans residues 217–230; it reads PNYESDPGEHSFWK. Residues 231–251 form a helical membrane-spanning segment; the sequence is LIALPKVGLIAFVINSLSSCF. Residues 252–272 lie on the Extracellular side of the membrane; it reads GFLDPTLSLFVLEKFNLPAGY. The chain crosses the membrane as a helical span at residues 273-293; the sequence is VGLVFLGMALSYAISSPLFGL. Topologically, residues 294-304 are cytoplasmic; sequence LSDKRPPLRKW. A helical transmembrane segment spans residues 305–325; that stretch reads LLVFGNLITAGCYMLLGPVPI. Residues 326–331 are Extracellular-facing; sequence LHIKSQ. The helical transmembrane segment at 332 to 352 threads the bilayer; it reads LWLLVLILVVSGLSAGMSIIP. Residues 353-377 are Cytoplasmic-facing; that stretch reads TFPEILSCAHENGFEEGLSTLGLVS. Residues 378–398 form a helical membrane-spanning segment; the sequence is GLFSAMWSIGAFMGPTLGGFL. The Extracellular segment spans residues 399–407; that stretch reads YEKIGFEWA. A helical transmembrane segment spans residues 408 to 428; sequence AAIQGLWALISGLAMGLFYLL. Topologically, residues 429-456 are cytoplasmic; the sequence is EYSRRKRSKSQNILSTEEERTTLLPNET. Residue serine 438 is modified to Phosphoserine.

This sequence belongs to the major facilitator superfamily. In terms of tissue distribution, expressed in various tissues including lung, placenta, adrenal gland, liver, testis, and brain.

The protein resides in the cytoplasmic vesicle. It is found in the secretory vesicle membrane. It localises to the secretory vesicle. The protein localises to the synaptic vesicle membrane. The enzyme catalyses spermine(in) + n H(+)(out) = spermine(out) + n H(+)(in). It catalyses the reaction spermidine(in) + n H(+)(out) = spermidine(out) + n H(+)(in). The catalysed reaction is serotonin(in) + n H(+)(out) = serotonin(out) + n H(+)(in). Proton-coupled polyamine antiporter involved in the translocation of polyamines from cytosol into secretory vesicles prior to their release via exocytosis. Uses the electrochemical proton gradient generated by a V-type proton-pumping ATPase to couple the efflux of protons with the uptake of a polyamine molecule. Facilitates vesicular storage of spermine and spermidine in astrocytes with an impact on glutamatergic neuronal transmission and memory formation. Upon antigen stimulation, regulates polyamine accumulation and release in mast cell secretory granules, which in turn potentiates mast cell degranulation and histamine secretion. In Homo sapiens (Human), this protein is MFS-type transporter SLC18B1.